A 249-amino-acid chain; its full sequence is 2,3-bisphosphoglycerate-dependent phosphoglycerate mutase (249 aa).

Substrate contacts are provided by residues 8–15 (RHGESVWN), 21–22 (TG), arginine 60, 87–90 (ERHY), lysine 98, 114–115 (RR), and 183–184 (GN). Histidine 9 functions as the Tele-phosphohistidine intermediate in the catalytic mechanism. Glutamate 87 acts as the Proton donor/acceptor in catalysis.

The protein belongs to the phosphoglycerate mutase family. BPG-dependent PGAM subfamily.

The enzyme catalyses (2R)-2-phosphoglycerate = (2R)-3-phosphoglycerate. It participates in carbohydrate degradation; glycolysis; pyruvate from D-glyceraldehyde 3-phosphate: step 3/5. In terms of biological role, catalyzes the interconversion of 2-phosphoglycerate and 3-phosphoglycerate. The polypeptide is 2,3-bisphosphoglycerate-dependent phosphoglycerate mutase (Endomicrobium trichonymphae).